A 158-amino-acid polypeptide reads, in one-letter code: Kalata-B3/B6 (158 aa).

Positions 1–22 are cleaved as a signal peptide; that stretch reads MAKFTKSLVLCLLLAAFVGAFG. A propeptide spanning residues 23 to 66 is cleaved from the precursor; sequence AELSEADKANVVNEIAANIQREILKGVKSSETTLTMFLKEMQLK. The segment at residues 67–96 is a cross-link (cyclopeptide (Gly-Asn)); that stretch reads GLPTCGETCFGGTCNTPGCSCSSWPICTRN. Intrachain disulfides connect C71-C85, C75-C87, and C80-C93. Residues 97–121 constitute a propeptide that is removed on maturation; that stretch reads GLPKRAGVKSSETTLTMFLKEMQLK. The cyclopeptide (Gly-Asp) cross-link spans 122 to 151; the sequence is GLPTCGETCFGGTCNTPGCTCDPWPICTRD. Disulfide bonds link C126/C140, C130/C142, and C135/C148. The propeptide occupies 152–158; that stretch reads GLPSAAA.

It belongs to the cyclotide family. Moebius subfamily. Kalata-B3 and kalata-B6 are cyclic peptides.

In terms of biological role, probably participates in a plant defense mechanism. Has hemolytic activity. This is Kalata-B3/B6 (OAK2) from Oldenlandia affinis.